The primary structure comprises 141 residues: Hemoglobin subunit alpha (141 aa).

The Globin domain maps to 1 to 141 (VLSDKDKTNV…VSTVLTSKYR (141 aa)). The residue at position 3 (Ser-3) is a Phosphoserine. The residue at position 7 (Lys-7) is an N6-succinyllysine. Position 8 is a phosphothreonine (Thr-8). Lys-11 carries the post-translational modification N6-succinyllysine. At Lys-16 the chain carries N6-acetyllysine; alternate. N6-succinyllysine; alternate is present on Lys-16. Phosphotyrosine is present on Tyr-24. The residue at position 35 (Ser-35) is a Phosphoserine. Position 40 is an N6-succinyllysine (Lys-40). Position 49 is a phosphoserine (Ser-49). His-58 lines the O2 pocket. His-87 is a heme b binding site. At Ser-102 the chain carries Phosphoserine. Position 108 is a phosphothreonine (Thr-108). Ser-124 is modified (phosphoserine). Phosphothreonine occurs at positions 134 and 137. Phosphoserine is present on Ser-138.

This sequence belongs to the globin family. In terms of assembly, heterotetramer of two alpha chains and two beta chains. Red blood cells.

Involved in oxygen transport from the lung to the various peripheral tissues. Functionally, hemopressin acts as an antagonist peptide of the cannabinoid receptor CNR1. Hemopressin-binding efficiently blocks cannabinoid receptor CNR1 and subsequent signaling. In Elephas maximus (Indian elephant), this protein is Hemoglobin subunit alpha (HBA).